Reading from the N-terminus, the 251-residue chain is Ubiquinone/menaquinone biosynthesis C-methyltransferase UbiE (251 aa).

S-adenosyl-L-methionine contacts are provided by residues Thr74, Asp95, and 123–124; that span reads NA.

This sequence belongs to the class I-like SAM-binding methyltransferase superfamily. MenG/UbiE family.

The enzyme catalyses a 2-demethylmenaquinol + S-adenosyl-L-methionine = a menaquinol + S-adenosyl-L-homocysteine + H(+). It catalyses the reaction a 2-methoxy-6-(all-trans-polyprenyl)benzene-1,4-diol + S-adenosyl-L-methionine = a 5-methoxy-2-methyl-3-(all-trans-polyprenyl)benzene-1,4-diol + S-adenosyl-L-homocysteine + H(+). Its pathway is quinol/quinone metabolism; menaquinone biosynthesis; menaquinol from 1,4-dihydroxy-2-naphthoate: step 2/2. It participates in cofactor biosynthesis; ubiquinone biosynthesis. Its function is as follows. Methyltransferase required for the conversion of demethylmenaquinol (DMKH2) to menaquinol (MKH2) and the conversion of 2-polyprenyl-6-methoxy-1,4-benzoquinol (DDMQH2) to 2-polyprenyl-3-methyl-6-methoxy-1,4-benzoquinol (DMQH2). The sequence is that of Ubiquinone/menaquinone biosynthesis C-methyltransferase UbiE from Psychromonas ingrahamii (strain DSM 17664 / CCUG 51855 / 37).